Reading from the N-terminus, the 351-residue chain is MGHRKLASPRRGSAGLRPRKRSSELLPTPRTWPQINSQNPKLLGFVGYKVGMTHVFMIDDWPNSPTNGKEIYMPVTVLEVPPIIPLALRAYAIDGKGEPNVITEYWSSSSLQFLDITRRIHSISSFLKDDESKKKFDERFNTKLDLIKSNLDRIVYFRLLVSTQPRKIPSLGKKAPDLVEIQIGGGEKKSQLDYALNILGKEITIRDVFKEGQLIDVVGVTKGKGFAGVIKRYSVVELPRWHKHRKGSRKIGTRGPSLGTPSYTPQPGQLGFHRRTEYNKRIIKIGDEPKEINPAGGFVRYGIVRNTYVLLEGSILGSKKRPIFLREPVRPSYVFENPPKITYVNLLSQQG.

Disordered stretches follow at residues 1–31 and 246–271; these read MGHR…TPRT and KGSR…GQLG.

It belongs to the universal ribosomal protein uL3 family. As to quaternary structure, part of the 50S ribosomal subunit. Forms a cluster with proteins L14 and L24e.

One of the primary rRNA binding proteins, it binds directly near the 3'-end of the 23S rRNA, where it nucleates assembly of the 50S subunit. The chain is Large ribosomal subunit protein uL3 from Saccharolobus solfataricus (strain ATCC 35092 / DSM 1617 / JCM 11322 / P2) (Sulfolobus solfataricus).